A 448-amino-acid chain; its full sequence is Trigger factor (448 aa).

Positions 172 to 257 constitute a PPIase FKBP-type domain; sequence GDRVTVDFVG…MKKIEWPHLP (86 aa).

It belongs to the FKBP-type PPIase family. Tig subfamily.

It localises to the cytoplasm. It catalyses the reaction [protein]-peptidylproline (omega=180) = [protein]-peptidylproline (omega=0). Functionally, involved in protein export. Acts as a chaperone by maintaining the newly synthesized protein in an open conformation. Functions as a peptidyl-prolyl cis-trans isomerase. The protein is Trigger factor of Burkholderia cenocepacia (strain HI2424).